The sequence spans 233 residues: Large ribosomal subunit protein uL1 (233 aa).

It belongs to the universal ribosomal protein uL1 family. As to quaternary structure, part of the 50S ribosomal subunit.

In terms of biological role, binds directly to 23S rRNA. The L1 stalk is quite mobile in the ribosome, and is involved in E site tRNA release. Protein L1 is also a translational repressor protein, it controls the translation of the L11 operon by binding to its mRNA. This chain is Large ribosomal subunit protein uL1, found in Zymomonas mobilis subsp. mobilis (strain ATCC 31821 / ZM4 / CP4).